The chain runs to 187 residues: Elongation factor P (187 aa).

Belongs to the elongation factor P family.

The protein resides in the cytoplasm. The protein operates within protein biosynthesis; polypeptide chain elongation. Functionally, involved in peptide bond synthesis. Stimulates efficient translation and peptide-bond synthesis on native or reconstituted 70S ribosomes in vitro. Probably functions indirectly by altering the affinity of the ribosome for aminoacyl-tRNA, thus increasing their reactivity as acceptors for peptidyl transferase. The chain is Elongation factor P from Flavobacterium psychrophilum (strain ATCC 49511 / DSM 21280 / CIP 103535 / JIP02/86).